Consider the following 420-residue polypeptide: Gamma-glutamyl phosphate reductase (420 aa).

Belongs to the gamma-glutamyl phosphate reductase family.

The protein localises to the cytoplasm. The enzyme catalyses L-glutamate 5-semialdehyde + phosphate + NADP(+) = L-glutamyl 5-phosphate + NADPH + H(+). The protein operates within amino-acid biosynthesis; L-proline biosynthesis; L-glutamate 5-semialdehyde from L-glutamate: step 2/2. Catalyzes the NADPH-dependent reduction of L-glutamate 5-phosphate into L-glutamate 5-semialdehyde and phosphate. The product spontaneously undergoes cyclization to form 1-pyrroline-5-carboxylate. In Streptococcus pneumoniae (strain P1031), this protein is Gamma-glutamyl phosphate reductase.